Consider the following 303-residue polypeptide: Oxygen-dependent coproporphyrinogen-III oxidase (303 aa).

Serine 94 contributes to the substrate binding site. 2 residues coordinate a divalent metal cation: histidine 98 and histidine 108. Histidine 108 acts as the Proton donor in catalysis. Position 110-112 (110-112 (NVR)) interacts with substrate. Residues histidine 147 and histidine 177 each coordinate a divalent metal cation. The important for dimerization stretch occupies residues 242–277 (YVEFNLVYDRGTLFGLQTGGRTESILMSLPPLVRWE). A substrate-binding site is contributed by 260–262 (GGR).

This sequence belongs to the aerobic coproporphyrinogen-III oxidase family. Homodimer. A divalent metal cation serves as cofactor.

It localises to the cytoplasm. It carries out the reaction coproporphyrinogen III + O2 + 2 H(+) = protoporphyrinogen IX + 2 CO2 + 2 H2O. Its pathway is porphyrin-containing compound metabolism; protoporphyrin-IX biosynthesis; protoporphyrinogen-IX from coproporphyrinogen-III (O2 route): step 1/1. Its function is as follows. Involved in the heme biosynthesis. Catalyzes the aerobic oxidative decarboxylation of propionate groups of rings A and B of coproporphyrinogen-III to yield the vinyl groups in protoporphyrinogen-IX. This is Oxygen-dependent coproporphyrinogen-III oxidase from Saccharophagus degradans (strain 2-40 / ATCC 43961 / DSM 17024).